Here is a 100-residue protein sequence, read N- to C-terminus: MAKQSMIQRELKRERLISKYSAKRQLLKEELKTVSSYNDKLAIYKKLEKLPRNSSPNRHRNRCWATGRSRAYYRDFGLSRHVLREMAHEGLIPGLTKSSW.

Belongs to the universal ribosomal protein uS14 family. As to quaternary structure, part of the 30S ribosomal subunit.

It is found in the plastid. The protein localises to the chloroplast. In terms of biological role, binds 16S rRNA, required for the assembly of 30S particles. In Emiliania huxleyi (Coccolithophore), this protein is Small ribosomal subunit protein uS14c.